Consider the following 276-residue polypeptide: Dermonecrotic toxin LspiSicTox-betaIE4ii (276 aa).

His5 is an active-site residue. Mg(2+) contacts are provided by Glu25 and Asp27. His41 serves as the catalytic Nucleophile. Intrachain disulfides connect Cys45–Cys51 and Cys47–Cys189. Residue Asp85 coordinates Mg(2+).

It belongs to the arthropod phospholipase D family. Class II subfamily. Mg(2+) is required as a cofactor. As to expression, expressed by the venom gland.

It localises to the secreted. It catalyses the reaction an N-(acyl)-sphingosylphosphocholine = an N-(acyl)-sphingosyl-1,3-cyclic phosphate + choline. It carries out the reaction an N-(acyl)-sphingosylphosphoethanolamine = an N-(acyl)-sphingosyl-1,3-cyclic phosphate + ethanolamine. The catalysed reaction is a 1-acyl-sn-glycero-3-phosphocholine = a 1-acyl-sn-glycero-2,3-cyclic phosphate + choline. The enzyme catalyses a 1-acyl-sn-glycero-3-phosphoethanolamine = a 1-acyl-sn-glycero-2,3-cyclic phosphate + ethanolamine. In terms of biological role, dermonecrotic toxins cleave the phosphodiester linkage between the phosphate and headgroup of certain phospholipids (sphingolipid and lysolipid substrates), forming an alcohol (often choline) and a cyclic phosphate. This toxin acts on sphingomyelin (SM). It may also act on ceramide phosphoethanolamine (CPE), lysophosphatidylcholine (LPC) and lysophosphatidylethanolamine (LPE), but not on lysophosphatidylserine (LPS), and lysophosphatidylglycerol (LPG). It acts by transphosphatidylation, releasing exclusively cyclic phosphate products as second products. Induces dermonecrosis, hemolysis, increased vascular permeability, edema, inflammatory response, and platelet aggregation. The sequence is that of Dermonecrotic toxin LspiSicTox-betaIE4ii from Loxosceles spinulosa (Recluse spider).